The sequence spans 213 residues: Thymidylate kinase (213 aa).

Residue 10-17 coordinates ATP; sequence GPDGAGKT.

This sequence belongs to the thymidylate kinase family.

The catalysed reaction is dTMP + ATP = dTDP + ADP. Functionally, phosphorylation of dTMP to form dTDP in both de novo and salvage pathways of dTTP synthesis. The chain is Thymidylate kinase from Limosilactobacillus reuteri (strain DSM 20016) (Lactobacillus reuteri).